A 378-amino-acid chain; its full sequence is tRNA (guanine(26)-N(2))-dimethyltransferase (378 aa).

The region spanning 4–374 is the Trm1 methyltransferase domain; the sequence is KEVTEGKVRI…KGYEEIIRCV (371 aa). S-adenosyl-L-methionine contacts are provided by Arg-44, Arg-69, Asp-87, Asp-114, and Ala-115. Residues Cys-246, Cys-249, Cys-263, and Cys-266 each coordinate Zn(2+).

The protein belongs to the class I-like SAM-binding methyltransferase superfamily. Trm1 family.

The catalysed reaction is guanosine(26) in tRNA + 2 S-adenosyl-L-methionine = N(2)-dimethylguanosine(26) in tRNA + 2 S-adenosyl-L-homocysteine + 2 H(+). Dimethylates a single guanine residue at position 26 of a number of tRNAs using S-adenosyl-L-methionine as donor of the methyl groups. The sequence is that of tRNA (guanine(26)-N(2))-dimethyltransferase from Saccharolobus islandicus (strain L.S.2.15 / Lassen #1) (Sulfolobus islandicus).